The primary structure comprises 160 residues: Large ribosomal subunit protein uL11 (160 aa).

Belongs to the universal ribosomal protein uL11 family. In terms of assembly, part of the ribosomal stalk of the 50S ribosomal subunit. Interacts with L10 and the large rRNA to form the base of the stalk. L10 forms an elongated spine to which L12 dimers bind in a sequential fashion forming a multimeric L10(L12)X complex.

Functionally, forms part of the ribosomal stalk which helps the ribosome interact with GTP-bound translation factors. The protein is Large ribosomal subunit protein uL11 of Methanothermobacter thermautotrophicus (strain ATCC 29096 / DSM 1053 / JCM 10044 / NBRC 100330 / Delta H) (Methanobacterium thermoautotrophicum).